The following is a 277-amino-acid chain: Alternative cytochrome c oxidase subunit 2 (277 aa).

Topologically, residues 1 to 40 (MAVALILLLIAIGSVLFHLFSPWWWTPIATNWGYIDDTIN) are periplasmic. A helical membrane pass occupies residues 41 to 61 (ITFWITGFVFTAVILFMAYCV). The Cytoplasmic portion of the chain corresponds to 62–83 (FRFHHKEGRQAAYNPENKKLEW). Residues 84 to 104 (WLSVGTGVGVAAMLAPGLVVW) traverse the membrane as a helical segment. Topologically, residues 105–277 (HQFVTVPADA…VRAKYNSGDD (173 aa)) are periplasmic. Positions 190, 225, 229, and 233 each coordinate Cu cation.

Belongs to the cytochrome c oxidase subunit 2 family.

It localises to the cell membrane. It carries out the reaction 4 Fe(II)-[cytochrome c] + O2 + 8 H(+)(in) = 4 Fe(III)-[cytochrome c] + 2 H2O + 4 H(+)(out). Functionally, cytochrome c oxidase is the component of the respiratory chain that catalyzes the reduction of oxygen to water. Subunits 1-3 form the functional core of the enzyme complex. Subunit 2 transfers the electrons from cytochrome c via its binuclear copper A center to the bimetallic center of the catalytic subunit 1. The polypeptide is Alternative cytochrome c oxidase subunit 2 (coxM) (Bradyrhizobium diazoefficiens (strain JCM 10833 / BCRC 13528 / IAM 13628 / NBRC 14792 / USDA 110)).